The following is a 1031-amino-acid chain: Protein translocase subunit SecA (1031 aa).

ATP contacts are provided by residues Gln143, 161 to 165, and Asp661; that span reads GEGKT. Residues 963–973 are compositionally biased toward basic and acidic residues; that stretch reads KERLVAKHEES. Residues 963 to 1031 form a disordered region; it reads KERLVAKHEE…GKKYKNCCGR (69 aa). Zn(2+)-binding residues include Cys1017, Cys1019, Cys1028, and Cys1029.

It belongs to the SecA family. Monomer and homodimer. Part of the essential Sec protein translocation apparatus which comprises SecA, SecYEG and auxiliary proteins SecDF. Other proteins may also be involved. Zn(2+) serves as cofactor.

The protein localises to the cell inner membrane. The protein resides in the cytoplasm. It carries out the reaction ATP + H2O + cellular proteinSide 1 = ADP + phosphate + cellular proteinSide 2.. Its function is as follows. Part of the Sec protein translocase complex. Interacts with the SecYEG preprotein conducting channel. Has a central role in coupling the hydrolysis of ATP to the transfer of proteins into and across the cell membrane, serving as an ATP-driven molecular motor driving the stepwise translocation of polypeptide chains across the membrane. The chain is Protein translocase subunit SecA from Prosthecochloris aestuarii (strain DSM 271 / SK 413).